The chain runs to 92 residues: Ribonuclease P protein component 1 (92 aa).

It belongs to the eukaryotic/archaeal RNase P protein component 1 family. As to quaternary structure, consists of a catalytic RNA component and at least 4-5 protein subunits.

The protein resides in the cytoplasm. It carries out the reaction Endonucleolytic cleavage of RNA, removing 5'-extranucleotides from tRNA precursor.. Functionally, part of ribonuclease P, a protein complex that generates mature tRNA molecules by cleaving their 5'-ends. The sequence is that of Ribonuclease P protein component 1 from Desulfurococcus amylolyticus (strain DSM 18924 / JCM 16383 / VKM B-2413 / 1221n) (Desulfurococcus kamchatkensis).